We begin with the raw amino-acid sequence, 90 residues long: Probable Fe(2+)-trafficking protein (90 aa).

This sequence belongs to the Fe(2+)-trafficking protein family.

In terms of biological role, could be a mediator in iron transactions between iron acquisition and iron-requiring processes, such as synthesis and/or repair of Fe-S clusters in biosynthetic enzymes. This is Probable Fe(2+)-trafficking protein from Koribacter versatilis (strain Ellin345).